Reading from the N-terminus, the 320-residue chain is Melanocyte-stimulating hormone receptor (320 aa).

Residues 1–40 are Extracellular-facing; the sequence is MPVLGPERRLLASLSSAPPAAPRLGLAANQTNQTGPQCLE. An N-linked (GlcNAc...) asparagine glycan is attached at asparagine 32. Residues 41–66 form a helical membrane-spanning segment; sequence VSIPDGLFLSLGLVSLVENVLVVAAI. At 67 to 75 the chain is on the cytoplasmic side; sequence AKNRNLHSP. Residues 76–96 traverse the membrane as a helical segment; that stretch reads MYYFVCCLAVSDLLVSVSNVL. Residues 97–121 are Extracellular-facing; sequence ETAVLLLLEAGALAAQAAVVQQLDN. The helical transmembrane segment at 122–143 threads the bilayer; sequence VMDVLICGSMVSSLCFLGAIAV. At 144–166 the chain is on the cytoplasmic side; sequence DRYVSIFYALRYHSIVTLPRAGR. A helical membrane pass occupies residues 167 to 186; the sequence is AIAAIWAGSVLSSTLFIAYY. Topologically, residues 187–194 are extracellular; sequence HHTAVLLG. Residues 195–214 traverse the membrane as a helical segment; it reads LVSFFVAMLALMAVLYVHML. At 215–243 the chain is on the cytoplasmic side; that stretch reads ARACQHGRHIARLHKTQHPTRQGCGLKGA. A helical membrane pass occupies residues 244-269; the sequence is ATLTILLGVFLLCWAPFFLHLSLVVL. The Extracellular portion of the chain corresponds to 270-282; that stretch reads CPQHPTCGCVFKN. Residues 283–303 form a helical membrane-spanning segment; it reads VNLFLALVICNSIVDPLIYAF. Topologically, residues 304–320 are cytoplasmic; that stretch reads RSQELRKTLQEVLQCSW.

The protein belongs to the G-protein coupled receptor 1 family. In terms of assembly, interacts with MGRN1, but does not undergo MGRN1-mediated ubiquitination; this interaction competes with GNAS-binding and thus inhibits agonist-induced cAMP production. Interacts with OPN3; the interaction results in a decrease in MC1R-mediated cAMP signaling and ultimately a decrease in melanin production in melanocytes.

It localises to the cell membrane. Its function is as follows. Receptor for MSH (alpha, beta and gamma) and ACTH. The activity of this receptor is mediated by G proteins which activate adenylate cyclase. Mediates melanogenesis, the production of eumelanin (black/brown) and phaeomelanin (red/yellow), via regulation of cAMP signaling in melanocytes. The polypeptide is Melanocyte-stimulating hormone receptor (MC1R) (Sus scrofa (Pig)).